The chain runs to 376 residues: Protein STRICTOSIDINE SYNTHASE-LIKE 8 (376 aa).

An N-terminal signal peptide occupies residues 1 to 31 (MPISRRVLTPITAAPVILAVLCFFFWSSIIG). N98, N172, and N224 each carry an N-linked (GlcNAc...) asparagine glycan.

This sequence belongs to the strictosidine synthase family.

It is found in the vacuole. This Arabidopsis thaliana (Mouse-ear cress) protein is Protein STRICTOSIDINE SYNTHASE-LIKE 8.